The primary structure comprises 162 residues: uncharacterized protein (162 aa).

The stretch at 129–161 (DLNAVLKNLKEVEKKSLKISKEELKKKLDQILG) forms a coiled coil.

This is an uncharacterized protein from Aquifex aeolicus (strain VF5).